A 440-amino-acid chain; its full sequence is Chromosome partition protein MukF (440 aa).

The tract at residues 208–236 (LSETSGTLRELQDTLEAAGDKLQANLLRI) is leucine-zipper.

This sequence belongs to the MukF family. As to quaternary structure, interacts, and probably forms a ternary complex, with MukE and MukB via its C-terminal region. The complex formation is stimulated by calcium or magnesium. It is required for an interaction between MukE and MukB.

Its subcellular location is the cytoplasm. It is found in the nucleoid. Involved in chromosome condensation, segregation and cell cycle progression. May participate in facilitating chromosome segregation by condensation DNA from both sides of a centrally located replisome during cell division. Not required for mini-F plasmid partitioning. Probably acts via its interaction with MukB and MukE. Overexpression results in anucleate cells. It has a calcium binding activity. This chain is Chromosome partition protein MukF, found in Salmonella paratyphi B (strain ATCC BAA-1250 / SPB7).